The following is a 273-amino-acid chain: tRNA (guanine-N(7)-)-methyltransferase (273 aa).

S-adenosyl-L-methionine-binding residues include glycine 86, glutamate 109, arginine 111, asparagine 142, alanine 143, and leucine 162. The active site involves aspartate 165. Residues 166 to 174 (PHFKKTKHK) are alphaC helix. S-adenosyl-L-methionine-binding residues include threonine 240 and glutamate 242. Residues 240–248 (TEEGKKVQR) form an alpha6 helix region.

The protein belongs to the class I-like SAM-binding methyltransferase superfamily. TrmB family. In terms of assembly, catalytic component of the METTL1-WDR4 complex, composed of mettl1 and wdr4.

The protein resides in the nucleus. It carries out the reaction guanosine(46) in tRNA + S-adenosyl-L-methionine = N(7)-methylguanosine(46) in tRNA + S-adenosyl-L-homocysteine. The catalysed reaction is a guanosine in mRNA + S-adenosyl-L-methionine = an N(7)-methylguanosine in mRNA + S-adenosyl-L-homocysteine. The enzyme catalyses a guanosine in miRNA + S-adenosyl-L-methionine = an N(7)-methylguanosine in miRNA + S-adenosyl-L-homocysteine. The protein operates within tRNA modification; N(7)-methylguanine-tRNA biosynthesis. Functionally, catalytic component of METTL1-WDR4 methyltransferase complex that mediates the formation of N(7)-methylguanine in a subset of RNA species, such as tRNAs, mRNAs and microRNAs (miRNAs). Catalyzes the formation of N(7)-methylguanine at position 46 (m7G46) in a large subset of tRNAs that contain the 5'-RAGGU-3' motif within the variable loop. M7G46 interacts with C13-G22 in the D-loop to stabilize tRNA tertiary structure and protect tRNAs from decay. Also acts as a methyltransferase for a subset of internal N(7)-methylguanine in mRNAs. Internal N(7)-methylguanine methylation of mRNAs in response to stress promotes their relocalization to stress granules, thereby suppressing their translation. Also methylates a specific subset of miRNAs. The protein is tRNA (guanine-N(7)-)-methyltransferase (mettl1) of Xenopus laevis (African clawed frog).